A 599-amino-acid polypeptide reads, in one-letter code: Aspartate--tRNA ligase (599 aa).

E180 contacts L-aspartate. Positions 204–207 (QIFK) are aspartate. Residue R226 coordinates L-aspartate. Residues 226-228 (RDE) and Q235 each bind ATP. H454 provides a ligand contact to L-aspartate. Residue E488 coordinates ATP. L-aspartate is bound at residue R495. Residue 540 to 543 (GLDR) coordinates ATP.

The protein belongs to the class-II aminoacyl-tRNA synthetase family. Type 1 subfamily. As to quaternary structure, homodimer.

It localises to the cytoplasm. The enzyme catalyses tRNA(Asp) + L-aspartate + ATP = L-aspartyl-tRNA(Asp) + AMP + diphosphate. Functionally, catalyzes the attachment of L-aspartate to tRNA(Asp) in a two-step reaction: L-aspartate is first activated by ATP to form Asp-AMP and then transferred to the acceptor end of tRNA(Asp). This is Aspartate--tRNA ligase from Clostridium botulinum (strain Eklund 17B / Type B).